The primary structure comprises 256 residues: MLRIADKTFDSHLFTGTGKFASSQLMVEAIRASGSQLVTLAMKRVDLRQHNDAILAPLIEAGVTLLPNTSGAKTAEEAIFAAQLAREALGTNWLKLEIHPDARWLLPDPIETLKAAEALVKQGFVVLPYCGADPVLCKRLEEVGCAAVMPLGAPIGSNQGLETKAMLEIIIQQSTVPVVVDAGIGVPSHATQALEMGADAVLVNTAIAVADDPVMMATAFRLAVEAGVLARQAVPGNRSTYASATSPLTGFLEALA.

K95 acts as the Schiff-base intermediate with DXP in catalysis. Residues G156, 182-183, and 204-205 contribute to the 1-deoxy-D-xylulose 5-phosphate site; these read AG and NT.

Belongs to the ThiG family. As to quaternary structure, homotetramer. Forms heterodimers with either ThiH or ThiS.

It is found in the cytoplasm. The catalysed reaction is [ThiS sulfur-carrier protein]-C-terminal-Gly-aminoethanethioate + 2-iminoacetate + 1-deoxy-D-xylulose 5-phosphate = [ThiS sulfur-carrier protein]-C-terminal Gly-Gly + 2-[(2R,5Z)-2-carboxy-4-methylthiazol-5(2H)-ylidene]ethyl phosphate + 2 H2O + H(+). It functions in the pathway cofactor biosynthesis; thiamine diphosphate biosynthesis. Catalyzes the rearrangement of 1-deoxy-D-xylulose 5-phosphate (DXP) to produce the thiazole phosphate moiety of thiamine. Sulfur is provided by the thiocarboxylate moiety of the carrier protein ThiS. In vitro, sulfur can be provided by H(2)S. In Salmonella agona (strain SL483), this protein is Thiazole synthase.